The chain runs to 122 residues: Small ribosomal subunit protein uS13 (122 aa).

A disordered region spans residues 99 to 122; it reads RGQRTHTNARTRKGPAKAIAGKKK.

Belongs to the universal ribosomal protein uS13 family. In terms of assembly, part of the 30S ribosomal subunit. Forms a loose heterodimer with protein S19. Forms two bridges to the 50S subunit in the 70S ribosome.

In terms of biological role, located at the top of the head of the 30S subunit, it contacts several helices of the 16S rRNA. In the 70S ribosome it contacts the 23S rRNA (bridge B1a) and protein L5 of the 50S subunit (bridge B1b), connecting the 2 subunits; these bridges are implicated in subunit movement. Contacts the tRNAs in the A and P-sites. In Cereibacter sphaeroides (strain ATCC 17025 / ATH 2.4.3) (Rhodobacter sphaeroides), this protein is Small ribosomal subunit protein uS13.